The sequence spans 400 residues: MIIKPKIRGFICTTAHPVGCEENVKEQIAYTKAQGPIANAPKRVLVVGSSSGYGLSSRIAAAFGGDAATIGVFFEKPSTEKKPGTAGWYNSAAFDKLAKEEGLYSKSLNGDAFSHEAKQKTIDLIKADLGQIDMVVYSLASPVRKMPETGEVVRSSLKPMGETYTATAVDTNKDVLIEASIEPATEQEIADTVTVMGGQDWELWINALSEAGVLADGCKTVAYSYIGTEITWPIYWHGALGKAKMDLDRAASELNNKLSATGGSANVAVLKSVVTQASSAIPVMPLYIAMVFKKMREEGVHEGCMQQIYRMFTQRLYKADGTAPEVDEENRLRLDDWELREDIQKHCRDLWSSVTNENLFEVADYQEYKDEFIKLFGFGIDSIDYDIDVNTLIEFDVESI.

NAD(+) is bound by residues 48-53 (GSSSGY), 74-75 (FE), 111-112 (DA), and 139-140 (LA). Tyr225 is a binding site for substrate. The active-site Proton donor is the Tyr235. Residues Lys244 and 273-275 (VVT) contribute to the NAD(+) site.

This sequence belongs to the TER reductase family. As to quaternary structure, monomer.

The catalysed reaction is a 2,3-saturated acyl-[ACP] + NAD(+) = a (2E)-enoyl-[ACP] + NADH + H(+). It functions in the pathway lipid metabolism; fatty acid biosynthesis. In terms of biological role, involved in the final reduction of the elongation cycle of fatty acid synthesis (FAS II). Catalyzes the reduction of a carbon-carbon double bond in an enoyl moiety that is covalently linked to an acyl carrier protein (ACP). The polypeptide is Enoyl-[acyl-carrier-protein] reductase [NADH] 1 (Photobacterium profundum (strain SS9)).